The primary structure comprises 295 residues: Protease HtpX (295 aa).

The next 2 helical transmembrane spans lie at 4-24 (ILLF…TLSL) and 42-62 (QLLV…LFIS). Position 147 (histidine 147) interacts with Zn(2+). The active site involves glutamate 148. Histidine 151 contacts Zn(2+). The next 2 membrane-spanning stretches (helical) occupy residues 158-178 (VTLA…ARII) and 199-219 (ITTI…VMWF). Zn(2+) is bound at residue glutamate 224.

The protein belongs to the peptidase M48B family. Requires Zn(2+) as cofactor.

The protein localises to the cell inner membrane. The protein is Protease HtpX of Pseudomonas syringae pv. tomato (strain ATCC BAA-871 / DC3000).